Here is a 299-residue protein sequence, read N- to C-terminus: Sulfate adenylyltransferase subunit 2 (299 aa).

Belongs to the PAPS reductase family. CysD subfamily. Sulfate-activating enzymes, NodP and NodQ, may be physically associated.

It catalyses the reaction sulfate + ATP + H(+) = adenosine 5'-phosphosulfate + diphosphate. Functionally, proposed to provide activated sulfate for transfer to nod factor. In Rhizobium meliloti (strain 1021) (Ensifer meliloti), this protein is Sulfate adenylyltransferase subunit 2 (nodP).